A 233-amino-acid polypeptide reads, in one-letter code: Orotidine 5'-phosphate decarboxylase (233 aa).

Residues D9, K31, D58–T67, T120, R182, Q191, G211, and R212 contribute to the substrate site. K60 acts as the Proton donor in catalysis.

The protein belongs to the OMP decarboxylase family. Type 1 subfamily. As to quaternary structure, homodimer.

The enzyme catalyses orotidine 5'-phosphate + H(+) = UMP + CO2. It participates in pyrimidine metabolism; UMP biosynthesis via de novo pathway; UMP from orotate: step 2/2. Functionally, catalyzes the decarboxylation of orotidine 5'-monophosphate (OMP) to uridine 5'-monophosphate (UMP). This chain is Orotidine 5'-phosphate decarboxylase, found in Listeria monocytogenes serotype 4b (strain CLIP80459).